Reading from the N-terminus, the 280-residue chain is DegV domain-containing protein TTE1491 (280 aa).

In terms of domain architecture, DegV spans 4–279; that stretch reads IAIVTDSLSD…PDAAGVFFEE (276 aa). The hexadecanoate site is built by Thr-61 and Ser-93.

Functionally, may bind long-chain fatty acids, such as palmitate, and may play a role in lipid transport or fatty acid metabolism. This Caldanaerobacter subterraneus subsp. tengcongensis (strain DSM 15242 / JCM 11007 / NBRC 100824 / MB4) (Thermoanaerobacter tengcongensis) protein is DegV domain-containing protein TTE1491.